The sequence spans 450 residues: Tubulin alpha-4 chain (450 aa).

Gln-11 is a binding site for GTP. At Lys-40 the chain carries N6-acetyllysine. Positions 71, 144, 145, 179, 206, and 228 each coordinate GTP. Residue Glu-71 participates in Mg(2+) binding. The active site involves Glu-254. The segment at 431–450 is disordered; it reads DYEEVGAESGEGDEGDEEEY.

The protein belongs to the tubulin family. In terms of assembly, dimer of alpha and beta chains. A typical microtubule is a hollow water-filled tube with an outer diameter of 25 nm and an inner diameter of 15 nM. Alpha-beta heterodimers associate head-to-tail to form protofilaments running lengthwise along the microtubule wall with the beta-tubulin subunit facing the microtubule plus end conferring a structural polarity. Microtubules usually have 13 protofilaments but different protofilament numbers can be found in some organisms and specialized cells. Mg(2+) serves as cofactor. In terms of processing, undergoes a tyrosination/detyrosination cycle, the cyclic removal and re-addition of a C-terminal tyrosine residue by the enzymes tubulin tyrosine carboxypeptidase (TTCP) and tubulin tyrosine ligase (TTL), respectively. Acetylation of alpha chains at Lys-40 stabilizes microtubules and affects affinity and processivity of microtubule motors. This modification has a role in multiple cellular functions, ranging from cell motility, cell cycle progression or cell differentiation to intracellular trafficking and signaling.

It is found in the cytoplasm. The protein resides in the cytoskeleton. The catalysed reaction is GTP + H2O = GDP + phosphate + H(+). Its function is as follows. Tubulin is the major constituent of microtubules, a cylinder consisting of laterally associated linear protofilaments composed of alpha- and beta-tubulin heterodimers. Microtubules grow by the addition of GTP-tubulin dimers to the microtubule end, where a stabilizing cap forms. Below the cap, tubulin dimers are in GDP-bound state, owing to GTPase activity of alpha-tubulin. The protein is Tubulin alpha-4 chain of Gossypium hirsutum (Upland cotton).